The following is a 274-amino-acid chain: Factor H binding protein (274 aa).

An N-terminal signal peptide occupies residues M1–A19. The N-palmitoyl cysteine moiety is linked to residue C20. C20 is lipidated: S-diacylglycerol cysteine. Residues V27–K119 are domain A. A domain B region spans residues Q120–G183. The domain C stretch occupies residues K184–Q274.

It belongs to the factor H binding-protein family. As to quaternary structure, binds to host factor H (fH from human). Both fHbp beta-barrels contact Sushi domains 6 and 7 in fH (also called complement control protein domains, CCP). This interaction probably mimics the normal (carbohydrate-dependent) mode of fH recruitement, regulating fH activity. Sucrose octasulphate inhibits the fHbp-fH interaction. Post-translationally, protein is lipidated in N.meningitidis upon growth in radioactive palmitic acid, probably on Cys-20.

The protein resides in the cell outer membrane. The protein localises to the secreted. It is found in the extracellular vesicle. Its subcellular location is the bacterial extracellular vesicle. Its function is as follows. A bacterial surface lipoprotein that binds host (human) complement factor H (fH, gene CFH), binding contributes to the avoidance of complement-mediated lysis by N.meningitidis. Binding of fH to the bacteria surface is independent of bacterial sialic acid moieties. fH binding affinity is high enough that it may sequester plasma fH, depleting its circulating levels and de-regulating complement in the host. This protein induces high levels of bactericidal antibodies in mice. The chain is Factor H binding protein (fhbP) from Neisseria meningitidis serogroup B (strain ATCC BAA-335 / MC58).